The chain runs to 451 residues: Tryptophan--tRNA ligase (451 aa).

ATP is bound by residues 10-12 (TTT) and 18-19 (GN). A 'HIGH' region motif is present at residues 11–19 (TTGTPHLGN). Residue Asp-143 coordinates L-tryptophan. Residues 155 to 157 (GRD), Leu-195, and 202 to 206 (KMSKS) each bind ATP. The 'KMSKS' region motif lies at 202–206 (KMSKS).

Belongs to the class-I aminoacyl-tRNA synthetase family. In terms of assembly, homodimer.

It is found in the cytoplasm. It catalyses the reaction tRNA(Trp) + L-tryptophan + ATP = L-tryptophyl-tRNA(Trp) + AMP + diphosphate + H(+). Its function is as follows. Catalyzes the attachment of tryptophan to tRNA(Trp). The polypeptide is Tryptophan--tRNA ligase (Bordetella bronchiseptica (strain ATCC BAA-588 / NCTC 13252 / RB50) (Alcaligenes bronchisepticus)).